We begin with the raw amino-acid sequence, 363 residues long: tRNA/tmRNA (uracil-C(5))-methyltransferase (363 aa).

Positions 187, 215, 220, 236, and 296 each coordinate S-adenosyl-L-methionine. Cysteine 321 serves as the catalytic Nucleophile. Glutamate 355 functions as the Proton acceptor in the catalytic mechanism.

Belongs to the class I-like SAM-binding methyltransferase superfamily. RNA M5U methyltransferase family. TrmA subfamily.

It catalyses the reaction uridine(54) in tRNA + S-adenosyl-L-methionine = 5-methyluridine(54) in tRNA + S-adenosyl-L-homocysteine + H(+). The enzyme catalyses uridine(341) in tmRNA + S-adenosyl-L-methionine = 5-methyluridine(341) in tmRNA + S-adenosyl-L-homocysteine + H(+). Functionally, dual-specificity methyltransferase that catalyzes the formation of 5-methyluridine at position 54 (m5U54) in all tRNAs, and that of position 341 (m5U341) in tmRNA (transfer-mRNA). The protein is tRNA/tmRNA (uracil-C(5))-methyltransferase of Pseudomonas paraeruginosa (strain DSM 24068 / PA7) (Pseudomonas aeruginosa (strain PA7)).